We begin with the raw amino-acid sequence, 218 residues long: GTP cyclohydrolase 1 (218 aa).

Zn(2+)-binding residues include Cys-109, His-112, and Cys-180.

This sequence belongs to the GTP cyclohydrolase I family. In terms of assembly, toroid-shaped homodecamer, composed of two pentamers of five dimers.

The catalysed reaction is GTP + H2O = 7,8-dihydroneopterin 3'-triphosphate + formate + H(+). It participates in cofactor biosynthesis; 7,8-dihydroneopterin triphosphate biosynthesis; 7,8-dihydroneopterin triphosphate from GTP: step 1/1. The polypeptide is GTP cyclohydrolase 1 (folE) (Haemophilus influenzae (strain ATCC 51907 / DSM 11121 / KW20 / Rd)).